A 317-amino-acid polypeptide reads, in one-letter code: Protein phosphatase 1 regulatory subunit 3C-B (317 aa).

The CBM21 domain maps to 150 to 258; sequence RNRLKKNLVC…NNDGKNYKLV (109 aa).

In terms of assembly, interacts with PPP1CC catalytic subunit of PP1 and associates with glycogen. Forms complexes with glycogen phosphorylase, glycogen synthase and phosphorylase kinase which is necessary for its regulation of PP1 activity.

Acts as a glycogen-targeting subunit for PP1 and regulates its activity. Activates glycogen synthase, reduces glycogen phosphorylase activity and limits glycogen breakdown. The sequence is that of Protein phosphatase 1 regulatory subunit 3C-B (ppp1r3cb) from Danio rerio (Zebrafish).